The following is a 449-amino-acid chain: MREIISLNVGQAGCQIANSCWELYCLEHGIQPDGYLTEERKAADPDHGFSTFFSETGNGKYVPRTIYADLEPNVIDEVRTGAYRGLFHPEHMISGKEDASNNYARGHYTVGKELIDQVLDKVRRVADNCSGLQGFLVFHSFGGGTGSGFGALLMERLSVDYGKKSKLEFCVYPAPQTATSVVEPYNSILTTHTTLEHADCSFMVDNEAIYDICRRNLGLERPNYENLNRLIAQVVSSITASLRFDGSLNVDLNEFQTNLVPYPRIHFPLVAYAPVISAAKAAHEANSVQEMTMSCFEPNNQMVKCDPRHGKYMATCLLYRGDVVPNDAHAAVATLKTKRTIQFVDWCPTGFKLGICYQPPHQVPNGDLAKVNRAVCMLSNTTAIAEAWSALSSKFDLMYSKRAFVHWYVGEGMEEGEFSEAREDLAALERDYEEVAADSMEGEDVEAEY.

Residues Gln11, Glu71, Ser140, Gly144, Thr145, Thr179, Asn206, and Asn228 each coordinate GTP. Glu71 serves as a coordination point for Mg(2+). Glu254 is a catalytic residue.

This sequence belongs to the tubulin family. As to quaternary structure, dimer of alpha and beta chains. A typical microtubule is a hollow water-filled tube with an outer diameter of 25 nm and an inner diameter of 15 nM. Alpha-beta heterodimers associate head-to-tail to form protofilaments running lengthwise along the microtubule wall with the beta-tubulin subunit facing the microtubule plus end conferring a structural polarity. Microtubules usually have 13 protofilaments but different protofilament numbers can be found in some organisms and specialized cells. It depends on Mg(2+) as a cofactor.

It localises to the cytoplasm. The protein localises to the cytoskeleton. The enzyme catalyses GTP + H2O = GDP + phosphate + H(+). Its function is as follows. Tubulin is the major constituent of microtubules, a cylinder consisting of laterally associated linear protofilaments composed of alpha- and beta-tubulin heterodimers. Microtubules grow by the addition of GTP-tubulin dimers to the microtubule end, where a stabilizing cap forms. Below the cap, tubulin dimers are in GDP-bound state, owing to GTPase activity of alpha-tubulin. The chain is Tubulin alpha-B chain (tba-2) from Neurospora crassa (strain ATCC 24698 / 74-OR23-1A / CBS 708.71 / DSM 1257 / FGSC 987).